Consider the following 235-residue polypeptide: 2-C-methyl-D-erythritol 4-phosphate cytidylyltransferase (235 aa).

This sequence belongs to the IspD/TarI cytidylyltransferase family. IspD subfamily.

The catalysed reaction is 2-C-methyl-D-erythritol 4-phosphate + CTP + H(+) = 4-CDP-2-C-methyl-D-erythritol + diphosphate. Its pathway is isoprenoid biosynthesis; isopentenyl diphosphate biosynthesis via DXP pathway; isopentenyl diphosphate from 1-deoxy-D-xylulose 5-phosphate: step 2/6. Its function is as follows. Catalyzes the formation of 4-diphosphocytidyl-2-C-methyl-D-erythritol from CTP and 2-C-methyl-D-erythritol 4-phosphate (MEP). This Leptospira borgpetersenii serovar Hardjo-bovis (strain L550) protein is 2-C-methyl-D-erythritol 4-phosphate cytidylyltransferase.